A 145-amino-acid chain; its full sequence is D-aminoacyl-tRNA deacylase (145 aa).

Positions 137-138 (GP) match the Gly-cisPro motif, important for rejection of L-amino acids motif.

This sequence belongs to the DTD family. Homodimer.

Its subcellular location is the cytoplasm. The catalysed reaction is glycyl-tRNA(Ala) + H2O = tRNA(Ala) + glycine + H(+). It catalyses the reaction a D-aminoacyl-tRNA + H2O = a tRNA + a D-alpha-amino acid + H(+). An aminoacyl-tRNA editing enzyme that deacylates mischarged D-aminoacyl-tRNAs. Also deacylates mischarged glycyl-tRNA(Ala), protecting cells against glycine mischarging by AlaRS. Acts via tRNA-based rather than protein-based catalysis; rejects L-amino acids rather than detecting D-amino acids in the active site. By recycling D-aminoacyl-tRNA to D-amino acids and free tRNA molecules, this enzyme counteracts the toxicity associated with the formation of D-aminoacyl-tRNA entities in vivo and helps enforce protein L-homochirality. This chain is D-aminoacyl-tRNA deacylase, found in Shewanella sp. (strain MR-4).